The following is a 485-amino-acid chain: Protein nucleotidyltransferase YdiU (485 aa).

The ATP site is built by glycine 90, glycine 92, arginine 93, lysine 113, aspartate 125, glycine 126, arginine 176, and arginine 183. Aspartate 252 acts as the Proton acceptor in catalysis. Mg(2+) contacts are provided by asparagine 253 and aspartate 262. Aspartate 262 is a binding site for ATP.

Belongs to the SELO family. Requires Mg(2+) as cofactor. Mn(2+) is required as a cofactor.

The catalysed reaction is L-seryl-[protein] + ATP = 3-O-(5'-adenylyl)-L-seryl-[protein] + diphosphate. The enzyme catalyses L-threonyl-[protein] + ATP = 3-O-(5'-adenylyl)-L-threonyl-[protein] + diphosphate. It carries out the reaction L-tyrosyl-[protein] + ATP = O-(5'-adenylyl)-L-tyrosyl-[protein] + diphosphate. It catalyses the reaction L-histidyl-[protein] + UTP = N(tele)-(5'-uridylyl)-L-histidyl-[protein] + diphosphate. The catalysed reaction is L-seryl-[protein] + UTP = O-(5'-uridylyl)-L-seryl-[protein] + diphosphate. The enzyme catalyses L-tyrosyl-[protein] + UTP = O-(5'-uridylyl)-L-tyrosyl-[protein] + diphosphate. Its function is as follows. Nucleotidyltransferase involved in the post-translational modification of proteins. It can catalyze the addition of adenosine monophosphate (AMP) or uridine monophosphate (UMP) to a protein, resulting in modifications known as AMPylation and UMPylation. The chain is Protein nucleotidyltransferase YdiU from Vibrio atlanticus (strain LGP32) (Vibrio splendidus (strain Mel32)).